Reading from the N-terminus, the 122-residue chain is Serum amyloid A-1 protein (122 aa).

An N-terminal signal peptide occupies residues 1–19 (MKLLTSLVFCSLLLGVCHG). The tract at residues 20–45 (GFFSFVHEAFQGAGDMWRAYTDMKEA) is important for amyloid formation. Basic and acidic residues predominate over residues 91–108 (HEDTIADQEANRHGRSGK). The segment at 91-122 (HEDTIADQEANRHGRSGKDPNYYRPPGLPDKY) is disordered.

The protein belongs to the SAA family. Homohexamer; dimer of trimers. Can form amyloid fibrils after partial proteolysis; the native, undenatured protein does not form amyloid fibrils (in vitro). Apolipoprotein of the HDL complex. Binds to heparin. In terms of tissue distribution, detected in blood plasma (at protein level). Detected in liver.

Its subcellular location is the secreted. Functionally, major acute phase protein. This is Serum amyloid A-1 protein (Saa1) from Mus musculus (Mouse).